The primary structure comprises 37 residues: Large ribosomal subunit protein bL36c (37 aa).

This sequence belongs to the bacterial ribosomal protein bL36 family.

It is found in the plastid. Its subcellular location is the chloroplast. The sequence is that of Large ribosomal subunit protein bL36c from Cryptomeria japonica (Japanese cedar).